The primary structure comprises 989 residues: AP-2 complex subunit alpha-2 (989 aa).

4 HEAT repeats span residues 112-149, 188-225, 368-402, and 403-440; these read EMLPLIINSFKEDLLARSDYFQSLALAAICNIGGKEVA, VTPDSWVERLVSVLDEPDFGVLTSLMSLLIELASENPI, IMIKKYQDTVLLSLKDSDISIRRRALDLLYGMCDK, and NTCKHIVAELLSYLQTADYAIREELVIKIANLAEKFAS. The disordered stretch occupies residues 610–745; it reads DNSNTTSNTA…SSSPISSGGS (136 aa). Low complexity predominate over residues 611-623; it reads NSNTTSNTANNSN. Residues 624–638 are compositionally biased toward polar residues; that stretch reads MINSQDSKISSGGFN. Positions 639 to 703 are enriched in low complexity; sequence QSPQPSQQQQ…QPVYQQQQQA (65 aa). Positions 704-714 are enriched in polar residues; the sequence is ESFSPVQSDTV. The segment covering 715-745 has biased composition (low complexity); it reads SSFGQQQQQQQGGFSSPTIQASSSPISSGGS.

Belongs to the adaptor complexes large subunit family. Adaptor protein complex 2 (AP-2) is a heterotetramer composed of two large adaptins (alpha-type and beta-type subunits), a medium adaptin (mu-type subunit AP50) and a small adaptin (sigma-type subunit AP17).

The protein resides in the cell membrane. It localises to the membrane. Its subcellular location is the coated pit. Component of the adaptor complexes which link clathrin to receptors in coated vesicles. Clathrin-associated protein complexes are believed to interact with the cytoplasmic tails of membrane proteins, leading to their selection and concentration. The chain is AP-2 complex subunit alpha-2 (ap2a1-1) from Dictyostelium discoideum (Social amoeba).